A 352-amino-acid chain; its full sequence is 4-hydroxy-2-oxovalerate aldolase (352 aa).

The 253-residue stretch at 13-265 (VRLTDTSLRD…KTGIDFFDIA (253 aa)) folds into the Pyruvate carboxyltransferase domain. Position 21-22 (21-22 (RD)) interacts with substrate. A Mn(2+)-binding site is contributed by Asp22. The Proton acceptor role is filled by His25. Residues Ser175 and His204 each coordinate substrate. Positions 204 and 206 each coordinate Mn(2+). Tyr295 is a substrate binding site.

It belongs to the 4-hydroxy-2-oxovalerate aldolase family.

The enzyme catalyses (S)-4-hydroxy-2-oxopentanoate = acetaldehyde + pyruvate. The polypeptide is 4-hydroxy-2-oxovalerate aldolase (Mycolicibacterium paratuberculosis (strain ATCC BAA-968 / K-10) (Mycobacterium paratuberculosis)).